The chain runs to 177 residues: Flavodoxin (177 aa).

The 170-residue stretch at 4–173 (IGIFFGSDTG…RIDTWLDKLK (170 aa)) folds into the Flavodoxin-like domain.

It belongs to the flavodoxin family. The cofactor is FMN.

Low-potential electron donor to a number of redox enzymes. NifF is the electron donor to nitrogenase. This Enterobacter agglomerans (Erwinia herbicola) protein is Flavodoxin (nifF).